We begin with the raw amino-acid sequence, 204 residues long: Somatotropin (204 aa).

The signal sequence occupies residues 1 to 17 (MDKVLFLLFVLSLGVSS). Q18 is modified (pyrrolidone carboxylic acid). Position 36 (H36) interacts with Zn(2+). A disulfide bond links C69 and C177. Position 186 (E186) interacts with Zn(2+). A disulfide bond links C194 and C202.

It belongs to the somatotropin/prolactin family.

Its subcellular location is the secreted. Functionally, growth hormone plays an important role in growth control and is involved in the regulation of several anabolic processes. Implicated as an osmoregulatory substance important for seawater adaptation. The protein is Somatotropin (gh) of Trichopodus trichopterus (Three spot gourami).